Consider the following 142-residue polypeptide: HTH-type transcriptional regulator MntR (142 aa).

Positions 1–63 constitute an HTH dtxR-type domain; sequence MPTPSMEDYI…YEKYRGLVLT (63 aa). Asp-8, Glu-11, His-77, Glu-99, Glu-102, and His-103 together coordinate Mn(2+).

It belongs to the DtxR/MntR family. In terms of assembly, homodimer.

It is found in the cytoplasm. DNA binding is strongly activated by Mn(2+). Its function is as follows. Central regulator of manganese homeostasis. The sequence is that of HTH-type transcriptional regulator MntR from Bacillus mycoides (strain KBAB4) (Bacillus weihenstephanensis).